A 1664-amino-acid chain; its full sequence is Peroxisome proliferator-activated receptor gamma coactivator-related protein 1 (1664 aa).

Disordered stretches follow at residues 1-44, 167-255, 436-555, 681-701, 735-793, 818-873, and 1045-1068; these read MAAR…GTLG, LLTL…VASF, PVVP…EGPL, VDPVLVKSRPTDPRRGAVSSA, IESG…ADIP, CLVP…PTPP, and HGAPQTEPTKVEVKPVPASPHPKH. Residues 12–22 show a composition bias toward pro residues; sequence APPPSGGPGPD. Residues 23–32 are compositionally biased toward gly residues; the sequence is PGGGARGSGW. Residues 201 to 224 show a composition bias toward low complexity; the sequence is SLPDPSWDFSPPSFLETSSPKLPS. The residue at position 237 (Ser237) is a Phosphoserine. A necessary for interaction with CREB1 and NRF1 and for transcriptional coactivation region spans residues 433–467; sequence VVEPVVPKEPQNPPANAAPGSQRARKGRKKKSKEQ. A compositionally biased stretch (basic residues) spans 455 to 464; sequence RARKGRKKKS. Polar residues predominate over residues 482–499; that stretch reads SSRGQSTVGTEVTSQVDN. Positions 522-531 are enriched in low complexity; that stretch reads RAWARAWAAA. Residues 533–549 show a composition bias toward polar residues; sequence ENSSPKNLERSAGQSSP. Ser536 and Ser548 each carry phosphoserine. Pro residues predominate over residues 823–836; sequence GPSPASPSPEPPVS. Positions 862–873 are enriched in low complexity; sequence VQSVSPAVPTPP. Ser1076 bears the Phosphoserine mark. 3 disordered regions span residues 1093 to 1130, 1182 to 1209, and 1334 to 1528; these read EEPASERLKPETQETRPREKPPLPATKAVPTPRQSTVP, SEAKKECPPPAPADSLAVGNSGGVDIPQ, and VLSL…DHYQ. Residues 1096 to 1113 are compositionally biased toward basic and acidic residues; that stretch reads ASERLKPETQETRPREKP. Residues 1365–1383 are compositionally biased toward low complexity; it reads PSAPCLAPSSLLSPEASPC. The interval 1379–1450 is necessary for interaction with CREB1 and NRF1; sequence EASPCRNDMN…SSSSSSSSSS (72 aa). The span at 1400-1409 shows a compositional bias: basic residues; the sequence is RSMRCYRKAC. A phosphoserine mark is found at Ser1411 and Ser1413. Low complexity-rich tracts occupy residues 1427-1459 and 1468-1500; these read SRSVSSGSNRTSEASSSSSSSSSSSRSRSRSLS and SSCSSSGRSRRCSSSSSSSSSSSSSSSSSSSSR. A compositionally biased stretch (basic residues) spans 1501 to 1519; the sequence is SRSRSPSPRRRSDRRRRYS. In terms of domain architecture, RRM spans 1543–1619; it reads RVVFIGKIPG…QPFDLCFGGR (77 aa).

As to quaternary structure, interacts with CREB1 and NRF1. In terms of tissue distribution, strongly expressed in heart and skeletal muscle, moderately in lung, placenta, intestine, liver, kidney, spleen, thymus, colon and brain. Also expressed in several oncocytic thyroid tumors.

The protein localises to the nucleus. In terms of biological role, acts as a coactivator during transcriptional activation of nuclear genes related to mitochondrial biogenesis and cell growth. Involved in the transcription coactivation of CREB and NRF1 target genes. In Homo sapiens (Human), this protein is Peroxisome proliferator-activated receptor gamma coactivator-related protein 1 (PPRC1).